The following is a 592-amino-acid chain: Cryptochrome-2 (592 aa).

A Photolyase/cryptochrome alpha/beta domain is found at 21–150 (ASSVHWFRKG…EVVTENSHTL (130 aa)). Residue Lys-29 forms a Glycyl lysine isopeptide (Lys-Gly) (interchain with G-Cter in ubiquitin) linkage. Residue Ser-89 is modified to Phosphoserine. Residues Lys-125 and Lys-241 each participate in a glycyl lysine isopeptide (Lys-Gly) (interchain with G-Cter in ubiquitin) cross-link. Position 265 is a phosphoserine; by MAPK (Ser-265). Ser-270 serves as a coordination point for FAD. Ser-298 is modified (phosphoserine). Gln-307 contributes to the FAD binding site. A Glycyl lysine isopeptide (Lys-Gly) (interchain with G-Cter in ubiquitin) cross-link involves residue Lys-347. FAD contacts are provided by residues His-373 and 405–407 (DAD). Residues 389-488 (WVSWESGVRV…IIGVDYPRPI (100 aa)) are required for inhibition of CLOCK-BMAL1-mediated transcription. Residues Lys-474 and Lys-503 each participate in a glycyl lysine isopeptide (Lys-Gly) (interchain with G-Cter in ubiquitin) cross-link. The segment at 532-592 (VAEPGSSQAG…PTQEPASKDS (61 aa)) is disordered. Over residues 536–547 (GSSQAGSISNTG) the composition is skewed to polar residues. Ser-553 carries the phosphoserine; by GSK3-beta modification. Ser-557 bears the Phosphoserine; by DYRK1A and MAPK mark. Polar residues predominate over residues 582–592 (MPTQEPASKDS).

This sequence belongs to the DNA photolyase class-1 family. In terms of assembly, component of the circadian core oscillator, which includes the CRY proteins, CLOCK or NPAS2, BMAL1 or BMAL2, CSNK1D and/or CSNK1E, TIMELESS, and the PER proteins. Interacts with TIMELESS. Interacts directly with PER1, PER2 and PER3; interaction with PER2 inhibits its ubiquitination and vice versa. Interacts with CLOCK-BMAL1. Interacts with BMAL1. Interacts with CLOCK. Interacts with NFIL3. Interacts with FBXL3 and FBXL21. FBXL3, PER2 and the cofactor FAD compete for overlapping binding sites. FBXL3 cannot bind CRY2 that interacts already with PER2 or that contains bound FAD. Interacts with PPP5C (via TPR repeats); the interaction down-regulates the PPP5C phosphatase activity on CSNK1E. Interacts with nuclear receptors AR and NR3C1/GR; the interaction is ligand dependent. Interacts with PRKDC. Interacts with CIART. Interacts with DDB1, USP7 and TARDBP. Interacts with HNF4A. Interacts with PPARA. Interacts with PPARG in a ligand-dependent manner. Interacts with PPARD (via domain NR LBD) in a ligand-dependent manner. Interacts with NR1I2 (via domain NR LBD) in a ligand-dependent manner. Interacts with NR1I3 and VDR in a ligand-dependent manner. It depends on FAD as a cofactor. (6R)-5,10-methylene-5,6,7,8-tetrahydrofolate serves as cofactor. Post-translationally, phosphorylation on Ser-265 by MAPK is important for the inhibition of CLOCK-BMAL1-mediated transcriptional activity. Phosphorylation by CSKNE requires interaction with PER1 or PER2. Phosphorylated in a circadian manner at Ser-553 and Ser-557 in the suprachiasmatic nucleus (SCN) and liver. Phosphorylation at Ser-557 by DYRK1A promotes subsequent phosphorylation at Ser-553 by GSK3-beta: the two-step phosphorylation at the neighboring Ser residues leads to its proteasomal degradation. Ubiquitinated by the SCF(FBXL3) and SCF(FBXL21) complexes, regulating the balance between degradation and stabilization. The SCF(FBXL3) complex is mainly nuclear and mediates ubiquitination and subsequent degradation of CRY2. In contrast, cytoplasmic SCF(FBXL21) complex-mediated ubiquitination leads to stabilize CRY2 and counteract the activity of the SCF(FBXL3) complex. The SCF(FBXL3) and SCF(FBXL21) complexes probably mediate ubiquitination at different Lys residues. The SCF(FBXL3) complex recognizes and binds CRY2 phosphorylated at Ser-553 and Ser-557. Ubiquitination may be inhibited by PER2. Deubiquitinated by USP7. In terms of tissue distribution, expression in the retina is restricted to the photoreceptor layer (at protein level). Expressed in all tissues examined including heart, brain, spleen, lung, liver, skeletal muscle, kidney and testis. Weak expression in spleen.

It is found in the cytoplasm. Its subcellular location is the nucleus. Its activity is regulated as follows. KL001 (N-[3-(9H-carbazol-9-yl)-2-hydroxypropyl]-N-(2-furanylmethyl)-methanesulfonamide) binds to CRY1 and stabilizes it by inhibiting FBXL3- and ubiquitin-dependent degradation of CRY1 resulting in lengthening of the circadian periods. KL001-mediated CRY1 stabilization can inhibit glucagon-induced gluconeogenesis in primary hepatocytes. In terms of biological role, transcriptional repressor which forms a core component of the circadian clock. The circadian clock, an internal time-keeping system, regulates various physiological processes through the generation of approximately 24 hour circadian rhythms in gene expression, which are translated into rhythms in metabolism and behavior. It is derived from the Latin roots 'circa' (about) and 'diem' (day) and acts as an important regulator of a wide array of physiological functions including metabolism, sleep, body temperature, blood pressure, endocrine, immune, cardiovascular, and renal function. Consists of two major components: the central clock, residing in the suprachiasmatic nucleus (SCN) of the brain, and the peripheral clocks that are present in nearly every tissue and organ system. Both the central and peripheral clocks can be reset by environmental cues, also known as Zeitgebers (German for 'timegivers'). The predominant Zeitgeber for the central clock is light, which is sensed by retina and signals directly to the SCN. The central clock entrains the peripheral clocks through neuronal and hormonal signals, body temperature and feeding-related cues, aligning all clocks with the external light/dark cycle. Circadian rhythms allow an organism to achieve temporal homeostasis with its environment at the molecular level by regulating gene expression to create a peak of protein expression once every 24 hours to control when a particular physiological process is most active with respect to the solar day. Transcription and translation of core clock components (CLOCK, NPAS2, BMAL1, BMAL2, PER1, PER2, PER3, CRY1 and CRY2) plays a critical role in rhythm generation, whereas delays imposed by post-translational modifications (PTMs) are important for determining the period (tau) of the rhythms (tau refers to the period of a rhythm and is the length, in time, of one complete cycle). A diurnal rhythm is synchronized with the day/night cycle, while the ultradian and infradian rhythms have a period shorter and longer than 24 hours, respectively. Disruptions in the circadian rhythms contribute to the pathology of cardiovascular diseases, cancer, metabolic syndromes and aging. A transcription/translation feedback loop (TTFL) forms the core of the molecular circadian clock mechanism. Transcription factors, CLOCK or NPAS2 and BMAL1 or BMAL2, form the positive limb of the feedback loop, act in the form of a heterodimer and activate the transcription of core clock genes and clock-controlled genes (involved in key metabolic processes), harboring E-box elements (5'-CACGTG-3') within their promoters. The core clock genes: PER1/2/3 and CRY1/2 which are transcriptional repressors form the negative limb of the feedback loop and interact with the CLOCK|NPAS2-BMAL1|BMAL2 heterodimer inhibiting its activity and thereby negatively regulating their own expression. This heterodimer also activates nuclear receptors NR1D1/2 and RORA/B/G, which form a second feedback loop and which activate and repress BMAL1 transcription, respectively. CRY1 and CRY2 have redundant functions but also differential and selective contributions at least in defining the pace of the SCN circadian clock and its circadian transcriptional outputs. Less potent transcriptional repressor in cerebellum and liver than CRY1, though less effective in lengthening the period of the SCN oscillator. Seems to play a critical role in tuning SCN circadian period by opposing the action of CRY1. With CRY1, dispensable for circadian rhythm generation but necessary for the development of intercellular networks for rhythm synchrony. May mediate circadian regulation of cAMP signaling and gluconeogenesis by blocking glucagon-mediated increases in intracellular cAMP concentrations and in CREB1 phosphorylation. Besides its role in the maintenance of the circadian clock, is also involved in the regulation of other processes. Plays a key role in glucose and lipid metabolism modulation, in part, through the transcriptional regulation of genes involved in these pathways, such as LEP or ACSL4. Represses glucocorticoid receptor NR3C1/GR-induced transcriptional activity by binding to glucocorticoid response elements (GREs). Represses the CLOCK-BMAL1 induced transcription of BHLHE40/DEC1 and NAMPT. Represses PPARD and its target genes in the skeletal muscle and limits exercise capacity. Represses the transcriptional activity of NR1I2. The chain is Cryptochrome-2 (Cry2) from Mus musculus (Mouse).